The following is a 339-amino-acid chain: Tetracenomycin polyketide synthesis 8-O-methyl transferase TcmO (339 aa).

S-adenosyl-L-methionine-binding positions include Asp-200 and 226–228 (GDF). Residue His-246 is the Proton acceptor of the active site.

This sequence belongs to the class I-like SAM-binding methyltransferase superfamily. Cation-independent O-methyltransferase family.

Its pathway is antibiotic biosynthesis; tetracenomycin C biosynthesis. The chain is Tetracenomycin polyketide synthesis 8-O-methyl transferase TcmO (tcmO) from Streptomyces glaucescens.